The chain runs to 380 residues: Cytochrome b (380 aa).

A run of 4 helical transmembrane segments spans residues 34-54, 78-99, 114-134, and 179-199; these read FGSL…LLAT, WLIR…YLHI, WNTG…GYVL, and FFAL…IHLT. His-84 and His-98 together coordinate heme b. Heme b-binding residues include His-183 and His-197. Position 202 (His-202) interacts with a ubiquinone. Transmembrane regions (helical) follow at residues 227–247, 289–309, 321–341, and 348–368; these read LKDI…ALFS, LGGV…PFLH, ISQL…WIGS, and FIII…ALFP.

The protein belongs to the cytochrome b family. The cytochrome bc1 complex contains 11 subunits: 3 respiratory subunits (MT-CYB, CYC1 and UQCRFS1), 2 core proteins (UQCRC1 and UQCRC2) and 6 low-molecular weight proteins (UQCRH/QCR6, UQCRB/QCR7, UQCRQ/QCR8, UQCR10/QCR9, UQCR11/QCR10 and a cleavage product of UQCRFS1). This cytochrome bc1 complex then forms a dimer. Heme b is required as a cofactor.

The protein resides in the mitochondrion inner membrane. Its function is as follows. Component of the ubiquinol-cytochrome c reductase complex (complex III or cytochrome b-c1 complex) that is part of the mitochondrial respiratory chain. The b-c1 complex mediates electron transfer from ubiquinol to cytochrome c. Contributes to the generation of a proton gradient across the mitochondrial membrane that is then used for ATP synthesis. This chain is Cytochrome b (MT-CYB), found in Buteo buteo (Eurasian buzzard).